A 440-amino-acid chain; its full sequence is Golgi-associated RAB2 interactor protein 2 (440 aa).

This sequence belongs to the GARIN family. As to quaternary structure, interacts with CALM1. As to expression, expressed in testis (at protein level).

It localises to the cell projection. Its subcellular location is the cilium. The protein resides in the flagellum. Functionally, seems to play a role in sperm motility. The protein is Golgi-associated RAB2 interactor protein 2 of Mus musculus (Mouse).